A 230-amino-acid chain; its full sequence is Ribosomal RNA small subunit methyltransferase G (230 aa).

Residues Gly-93, Leu-98, Ile-144–Glu-145, and Arg-158 each bind S-adenosyl-L-methionine.

The protein belongs to the methyltransferase superfamily. RNA methyltransferase RsmG family.

Its subcellular location is the cytoplasm. It catalyses the reaction guanosine(527) in 16S rRNA + S-adenosyl-L-methionine = N(7)-methylguanosine(527) in 16S rRNA + S-adenosyl-L-homocysteine. In terms of biological role, specifically methylates the N7 position of guanine in position 527 of 16S rRNA. The chain is Ribosomal RNA small subunit methyltransferase G from Bordetella parapertussis (strain 12822 / ATCC BAA-587 / NCTC 13253).